Here is an 89-residue protein sequence, read N- to C-terminus: Small ribosomal subunit protein uS15 (89 aa).

Belongs to the universal ribosomal protein uS15 family. In terms of assembly, part of the 30S ribosomal subunit. Forms a bridge to the 50S subunit in the 70S ribosome, contacting the 23S rRNA.

In terms of biological role, one of the primary rRNA binding proteins, it binds directly to 16S rRNA where it helps nucleate assembly of the platform of the 30S subunit by binding and bridging several RNA helices of the 16S rRNA. Its function is as follows. Forms an intersubunit bridge (bridge B4) with the 23S rRNA of the 50S subunit in the ribosome. The sequence is that of Small ribosomal subunit protein uS15 from Anaeromyxobacter dehalogenans (strain 2CP-1 / ATCC BAA-258).